We begin with the raw amino-acid sequence, 209 residues long: Glutathione S-transferase 2 (209 aa).

Positions 1-81 constitute a GST N-terminal domain; it reads MLDFYYLPGS…YLCDQYGDED (81 aa). Residues Ser10, 51-53, and 65-67 contribute to the glutathione site; these read RTI and ESR. The GST C-terminal domain maps to 88–209; it reads DTIQRAIVNQ…SGAKEFLTYK (122 aa).

This sequence belongs to the GST superfamily. Theta family. Homodimer.

The catalysed reaction is RX + glutathione = an S-substituted glutathione + a halide anion + H(+). Functionally, conjugation of reduced glutathione to a wide number of exogenous and endogenous hydrophobic electrophiles. This Anopheles gambiae (African malaria mosquito) protein is Glutathione S-transferase 2 (GstD2).